The chain runs to 545 residues: CTP synthase (545 aa).

The interval 1 to 266 (MTTNYIFVTG…DDYICKRFSL (266 aa)) is amidoligase domain. Ser-14 contributes to the CTP binding site. Residue Ser-14 participates in UTP binding. Residues 15-20 (SLGKGI) and Asp-72 each bind ATP. Mg(2+) is bound by residues Asp-72 and Glu-140. Residues 147 to 149 (DIE), 187 to 192 (KTKPTQ), and Lys-223 each bind CTP. Residues 187–192 (KTKPTQ) and Lys-223 each bind UTP. Residue 239 to 241 (KDV) coordinates ATP. In terms of domain architecture, Glutamine amidotransferase type-1 spans 291-542 (TIGMVGKYIE…VKAANEHQKR (252 aa)). An L-glutamine-binding site is contributed by Gly-352. The Nucleophile; for glutamine hydrolysis role is filled by Cys-379. Residues 380–383 (LGMQ), Glu-403, and Arg-470 each bind L-glutamine. Active-site residues include His-515 and Glu-517.

Belongs to the CTP synthase family. Homotetramer.

It carries out the reaction UTP + L-glutamine + ATP + H2O = CTP + L-glutamate + ADP + phosphate + 2 H(+). The enzyme catalyses L-glutamine + H2O = L-glutamate + NH4(+). It catalyses the reaction UTP + NH4(+) + ATP = CTP + ADP + phosphate + 2 H(+). The protein operates within pyrimidine metabolism; CTP biosynthesis via de novo pathway; CTP from UDP: step 2/2. Its activity is regulated as follows. Allosterically activated by GTP, when glutamine is the substrate; GTP has no effect on the reaction when ammonia is the substrate. The allosteric effector GTP functions by stabilizing the protein conformation that binds the tetrahedral intermediate(s) formed during glutamine hydrolysis. Inhibited by the product CTP, via allosteric rather than competitive inhibition. Its function is as follows. Catalyzes the ATP-dependent amination of UTP to CTP with either L-glutamine or ammonia as the source of nitrogen. Regulates intracellular CTP levels through interactions with the four ribonucleotide triphosphates. This Salmonella newport (strain SL254) protein is CTP synthase.